The primary structure comprises 214 residues: A-type ATP synthase subunit D (214 aa).

It belongs to the V-ATPase D subunit family. Has multiple subunits with at least A(3), B(3), C, D, E, F, H, I and proteolipid K(x).

The protein localises to the cell membrane. Functionally, component of the A-type ATP synthase that produces ATP from ADP in the presence of a proton gradient across the membrane. The sequence is that of A-type ATP synthase subunit D from Methanosphaera stadtmanae (strain ATCC 43021 / DSM 3091 / JCM 11832 / MCB-3).